Here is a 75-residue protein sequence, read N- to C-terminus: Scuwaprin-a (75 aa).

Residues M1–G24 form the signal peptide. One can recognise a WAP domain in the interval R27–I72. 4 disulfide bridges follow: C34–C60, C43–C64, C47–C59, and C53–C68.

This sequence belongs to the venom waprin family. In terms of tissue distribution, expressed by the venom gland.

The protein localises to the secreted. Functionally, damages membranes of susceptible bacteria. Has no hemolytic activity. Not toxic to mice. Does not inhibit the proteinases elastase and cathepsin G. The protein is Scuwaprin-a of Oxyuranus scutellatus scutellatus (Australian taipan).